The primary structure comprises 174 residues: Protein GrpE (174 aa).

The interval 1-35 (MAQDIKNEEVEEVQEEEVVETAEETTPEKSELDLA) is disordered. Positions 9 to 25 (EVEEVQEEEVVETAEET) are enriched in acidic residues. Over residues 26–35 (TPEKSELDLA) the composition is skewed to basic and acidic residues.

The protein belongs to the GrpE family. Homodimer.

It localises to the cytoplasm. Participates actively in the response to hyperosmotic and heat shock by preventing the aggregation of stress-denatured proteins, in association with DnaK and GrpE. It is the nucleotide exchange factor for DnaK and may function as a thermosensor. Unfolded proteins bind initially to DnaJ; upon interaction with the DnaJ-bound protein, DnaK hydrolyzes its bound ATP, resulting in the formation of a stable complex. GrpE releases ADP from DnaK; ATP binding to DnaK triggers the release of the substrate protein, thus completing the reaction cycle. Several rounds of ATP-dependent interactions between DnaJ, DnaK and GrpE are required for fully efficient folding. This is Protein GrpE from Streptococcus pneumoniae (strain ATCC 700669 / Spain 23F-1).